The sequence spans 270 residues: Sorting nexin-11 (270 aa).

A PX domain is found at 16-132 (VITVRVQDPR…HLFLQSQLSV (117 aa)). Arg59, Lys85, and Arg99 together coordinate a 1,2-diacyl-sn-glycero-3-phospho-(1D-myo-inositol-3-phosphate). Positions 135–139 (IEACV) are important for membrane trafficking. A compositionally biased stretch (basic and acidic residues) spans 168 to 177 (SSSHLAKGDQ). The disordered stretch occupies residues 168-203 (SSSHLAKGDQPKSCCFLPRSGRRSSPSPPPSEEKDH).

This sequence belongs to the sorting nexin family. As to quaternary structure, monomer. Interacts with TRPV3; this interaction promotes TRPV3 trafficking from the cell membrane to lysosome for degradation.

It localises to the cell membrane. Its subcellular location is the endosome. The protein localises to the cytoplasm. Phosphoinositide-binding protein involved in protein sorting and membrane trafficking in endosomes. Regulates the levels of TRPV3 by promoting its trafficking from the cell membrane to lysosome for degradation. The sequence is that of Sorting nexin-11 (SNX11) from Homo sapiens (Human).